Here is a 196-residue protein sequence, read N- to C-terminus: Somatotropin (196 aa).

Residues 1–16 (MDKVILVLLMSLGASS) form the signal peptide. Gln-17 carries the post-translational modification Pyrrolidone carboxylic acid. Zn(2+) is bound at residue His-35. Cysteines 67 and 169 form a disulfide. Glu-178 contributes to the Zn(2+) binding site. Residues Cys-186 and Cys-194 are joined by a disulfide bond.

Belongs to the somatotropin/prolactin family.

It is found in the secreted. Functionally, growth hormone plays an important role in growth control and is involved in the regulation of several anabolic processes. Implicated as an osmoregulatory substance important for seawater adaptation. In Takifugu rubripes (Japanese pufferfish), this protein is Somatotropin (gh).